The sequence spans 286 residues: MPRFGAHMSISGGVSKSFARGESVGLDAMQIFAKNERQWTAKPISAEEMAAFQAEQQRTGIHPVIVHDSYLINLAAPADDLREKSIVAFADELERCAQLKIPYLVTHPGAHTGIGEEAGLVRVADAISRLLAEGVGGTTMILLETTAGQGTALGYRFEHLARLFELIPYHDRLGVCVDTCHIFAAGYDIRDPDTYDATFAELDRLVGLERVKCFHLNDSQKDLGSRVDRHAHIGQGCIGTEAFRLLVNDPRFAHLPMIIETPKGEDMAEDRMNLALLRSLVRITAA.

Residues His67, His107, Glu144, Asp178, His181, His215, Asp228, His230, and Glu260 each contribute to the Zn(2+) site.

Belongs to the AP endonuclease 2 family. The cofactor is Zn(2+).

The enzyme catalyses Endonucleolytic cleavage to 5'-phosphooligonucleotide end-products.. In terms of biological role, endonuclease IV plays a role in DNA repair. It cleaves phosphodiester bonds at apurinic or apyrimidinic (AP) sites, generating a 3'-hydroxyl group and a 5'-terminal sugar phosphate. This Chloroflexus aggregans (strain MD-66 / DSM 9485) protein is Probable endonuclease 4.